We begin with the raw amino-acid sequence, 346 residues long: Methionine import ATP-binding protein MetN 1 (346 aa).

Residues 2-241 form the ABC transporter domain; the sequence is IELKNVSKVF…PQHVTTKKFV (240 aa). 38-45 provides a ligand contact to ATP; that stretch reads GYSGAGKS.

It belongs to the ABC transporter superfamily. Methionine importer (TC 3.A.1.24) family. As to quaternary structure, the complex is composed of two ATP-binding proteins (MetN), two transmembrane proteins (MetI) and a solute-binding protein (MetQ).

It is found in the cell membrane. It catalyses the reaction L-methionine(out) + ATP + H2O = L-methionine(in) + ADP + phosphate + H(+). The enzyme catalyses D-methionine(out) + ATP + H2O = D-methionine(in) + ADP + phosphate + H(+). Part of the ABC transporter complex MetNIQ involved in methionine import. Responsible for energy coupling to the transport system. The polypeptide is Methionine import ATP-binding protein MetN 1 (Bacillus cereus (strain ATCC 10987 / NRS 248)).